Here is a 679-residue protein sequence, read N- to C-terminus: Sodium-dependent phosphate transporter 1 (679 aa).

The next 6 helical transmembrane spans lie at 21–41 (YLWM…SVGA), 62–82 (ACIL…AKVS), 100–120 (GLLM…QLVA), 158–178 (IVMS…ILFF), 203–223 (ACTV…LLGF), and 230–250 (GTIL…WFFV). A phosphoserine mark is found at Ser-265 and Ser-269. Residues 268–288 (ESPLMEKKNSLKEDHEETKLS) form a disordered region. The span at 271-286 (LMEKKNSLKEDHEETK) shows a compositional bias: basic and acidic residues. 4 helical membrane-spanning segments follow: residues 511 to 531 (VSLL…FAHG), 558 to 578 (VATP…GLWV), 600 to 620 (FSIE…GLPI), and 650 to 670 (IFMA…AIMA). The segment at 550-558 (DTGDVSSKV) is a.

The protein belongs to the inorganic phosphate transporter (PiT) (TC 2.A.20) family.

The protein resides in the cell membrane. The catalysed reaction is 2 Na(+)(out) + phosphate(out) = 2 Na(+)(in) + phosphate(in). In terms of biological role, sodium-phosphate symporter which preferentially transports the monovalent form of phosphate with a stoichiometry of two sodium ions per phosphate ion. May play a role in extracellular matrix and cartilage calcification as well as in vascular calcification. Essential for cell proliferation but this function is independent of its phosphate transporter activity. This is Sodium-dependent phosphate transporter 1 (SLC20A1) from Pongo abelii (Sumatran orangutan).